The sequence spans 1015 residues: DNA polymerase catalytic subunit (1015 aa).

This sequence belongs to the DNA polymerase type-B family. Forms a complex with the major DNA-binding protein BALF2, the DNA polymerase processivity factor BMRF1, and the alkaline exonuclease BGLF5. Interacts with the putative helicase-primase complex composed of BBLF4, BSLF1 and BBLF2/3 proteins; these interactions may coordinate leading and lagging strand DNA synthesis at the replication fork.

Its subcellular location is the host nucleus. It catalyses the reaction DNA(n) + a 2'-deoxyribonucleoside 5'-triphosphate = DNA(n+1) + diphosphate. Its function is as follows. Replicates viral genomic DNA in the late phase of lytic infection, producing long concatemeric DNA. The replication complex is composed of six viral proteins: the DNA polymerase, processivity factor, primase, primase-associated factor, helicase, and ssDNA-binding protein. This is DNA polymerase catalytic subunit from Homo sapiens (Human).